The following is a 255-amino-acid chain: Putative oxidoreductase YtkK (255 aa).

7–14 (TAGSKGLG) is a binding site for NAD(+).

This sequence belongs to the short-chain dehydrogenases/reductases (SDR) family.

This chain is Putative oxidoreductase YtkK (ytkK), found in Bacillus subtilis (strain 168).